The sequence spans 315 residues: MAGFPLGGGSHSRDNPAPPVPPVHPADAASFLYATRGGSFQLWQQQEQQPFYASNIIRFADDAPPAPSLAGASSSSSSRGMRSSGGGGGGGGGGISCQDCGNQAKKDCTHMRCRTCCKSRGFACATHVKSTWVPAAKRRERQQQLAALAASAAATAGGAGPSRDPTKRPRARPSATTPTTSSGDQQMVTVAERFPREVSSEAVFRCVRLGPVDQAEAEVAYQTAVSIGGHVFKGILHDVGPEALAVAGGGGASEYHFRLTGDGSSPSTAAAGEAGSGGGGNIIVSSAVVMDPYPTPGPYGAFPAGTPFFHGHPRP.

Residues 1–10 (MAGFPLGGGS) are compositionally biased toward gly residues. 2 disordered regions span residues 1 to 24 (MAGF…PPVH) and 64 to 92 (PPAP…GGGG). The span at 70–82 (AGASSSSSSRGMR) shows a compositional bias: low complexity. Residues 83–92 (SSGGGGGGGG) are compositionally biased toward gly residues. Zn(2+) contacts are provided by C97, C100, C108, C113, C117, and C124. The segment at residues 97 to 124 (CQDCGNQAKKDCTHMRCRTCCKSRGFAC) is a DNA-binding region (zn(2)-C6 fungal-type; degenerate). Low complexity-rich tracts occupy residues 143–156 (QQLA…AATA) and 172–182 (RPSATTPTTSS). The segment at 143 to 186 (QQLAALAASAAATAGGAGPSRDPTKRPRARPSATTPTTSSGDQQ) is disordered. The Required for homo- and heterodimerization motif lies at 227-230 (IGGH).

The protein belongs to the SHI protein family. As to quaternary structure, forms homodimers (via C-terminus). Interacts with SPL14/IPA1 (via C-terminus). Predominantly expressed in axillary buds and young panicles.

The protein localises to the nucleus. Regulates tillering and panicle branching by modulating SPL14/IPA1 transcriptional activity on the downstream TB1 and DEP1 target genes. Binds directly to the 5'-T/GCTCTAC-3' DNA motif found in the promoter regions of both TB1 and DEP1. Represses the DNA binding activity of SPL14/IPA1 toward the promoters of both TB1 and DEP1. Exhibits weak transcriptional activation activity in yeast cells. This chain is Protein SHORT INTERNODES 1, found in Oryza sativa subsp. japonica (Rice).